The sequence spans 152 residues: Large ribosomal subunit protein uL15 (152 aa).

The tract at residues 1–66 is disordered; sequence MRSNPMTLRL…GFEGGQTPMQ (66 aa). A compositionally biased stretch (gly residues) spans 28–38; sequence RGIGSGLGKTA. Positions 39–52 are enriched in basic residues; that stretch reads GRGHKGSFARKGGG.

It belongs to the universal ribosomal protein uL15 family. In terms of assembly, part of the 50S ribosomal subunit.

In terms of biological role, binds to the 23S rRNA. The protein is Large ribosomal subunit protein uL15 of Xanthomonas oryzae pv. oryzae (strain KACC10331 / KXO85).